A 457-amino-acid polypeptide reads, in one-letter code: Cysteine--tRNA ligase (457 aa).

Cysteine 30 is a Zn(2+) binding site. The 'HIGH' region signature appears at 32-42; sequence PTVYAPAHIGN. Positions 221, 246, and 250 each coordinate Zn(2+). A 'KMSKS' region motif is present at residues 278 to 282; the sequence is KMSKS. Lysine 281 lines the ATP pocket.

Belongs to the class-I aminoacyl-tRNA synthetase family. As to quaternary structure, monomer. Zn(2+) is required as a cofactor.

Its subcellular location is the cytoplasm. It carries out the reaction tRNA(Cys) + L-cysteine + ATP = L-cysteinyl-tRNA(Cys) + AMP + diphosphate. The protein is Cysteine--tRNA ligase of Opitutus terrae (strain DSM 11246 / JCM 15787 / PB90-1).